Here is a 79-residue protein sequence, read N- to C-terminus: Protein S100-G (79 aa).

Residue serine 2 is modified to N-acetylserine. EF-hand domains follow at residues isoleucine 13 to serine 48 and lysine 45 to glutamine 79. The Ca(2+) site is built by glutamine 26 and glutamate 31. Serine 42 and serine 47 each carry phosphoserine. Ca(2+) is bound by residues aspartate 58, asparagine 60, aspartate 62, glutamate 64, and glutamate 69.

Belongs to the S-100 family.

The polypeptide is Protein S100-G (S100g) (Rattus norvegicus (Rat)).